Here is a 232-residue protein sequence, read N- to C-terminus: Large ribosomal subunit protein uL1 (232 aa).

Belongs to the universal ribosomal protein uL1 family. As to quaternary structure, part of the 50S ribosomal subunit.

In terms of biological role, binds directly to 23S rRNA. The L1 stalk is quite mobile in the ribosome, and is involved in E site tRNA release. Its function is as follows. Protein L1 is also a translational repressor protein, it controls the translation of the L11 operon by binding to its mRNA. The protein is Large ribosomal subunit protein uL1 of Xylella fastidiosa (strain 9a5c).